The following is a 187-amino-acid chain: Shikimate kinase (187 aa).

14–19 (GSGKST) is a binding site for ATP. S18 lines the Mg(2+) pocket. The substrate site is built by D36, R60, and G82. R120 provides a ligand contact to ATP. Substrate is bound at residue R147.

It belongs to the shikimate kinase family. As to quaternary structure, monomer. Mg(2+) is required as a cofactor.

It is found in the cytoplasm. It carries out the reaction shikimate + ATP = 3-phosphoshikimate + ADP + H(+). It participates in metabolic intermediate biosynthesis; chorismate biosynthesis; chorismate from D-erythrose 4-phosphate and phosphoenolpyruvate: step 5/7. Its function is as follows. Catalyzes the specific phosphorylation of the 3-hydroxyl group of shikimic acid using ATP as a cosubstrate. This chain is Shikimate kinase, found in Chlorobaculum parvum (strain DSM 263 / NCIMB 8327) (Chlorobium vibrioforme subsp. thiosulfatophilum).